The following is an 82-amino-acid chain: DNA-directed RNA polymerase subunit Rpo5 (82 aa).

Belongs to the archaeal Rpo5/eukaryotic RPB5 RNA polymerase subunit family. In terms of assembly, part of the RNA polymerase complex.

Its subcellular location is the cytoplasm. It carries out the reaction RNA(n) + a ribonucleoside 5'-triphosphate = RNA(n+1) + diphosphate. DNA-dependent RNA polymerase (RNAP) catalyzes the transcription of DNA into RNA using the four ribonucleoside triphosphates as substrates. The sequence is that of DNA-directed RNA polymerase subunit Rpo5 from Thermococcus celer.